Here is a 206-residue protein sequence, read N- to C-terminus: Large ribosomal subunit protein uL22m (206 aa).

Residues 1–40 constitute a mitochondrion transit peptide; that stretch reads MAAALLRELGALRVPNLRIWATQTLRVLPPSCIHTSASLD.

Belongs to the universal ribosomal protein uL22 family. Component of the mitochondrial ribosome large subunit (39S) which comprises a 16S rRNA and about 50 distinct proteins.

It is found in the mitochondrion. This Mus musculus (Mouse) protein is Large ribosomal subunit protein uL22m (Mrpl22).